Consider the following 383-residue polypeptide: MKQAFNQRISSALNQRKQAGLNRSRRVVSQGNQATLVVDGKSYLNFSGNDYLGLASSKELMEAWQEGLSLYGSGSGASPLVTGYSKPHANLESQLAEWLGLDCAILFNSGFSANQAVLFSLLEKGDTLLQDKLNHASLMEAGMLSPAVMKRFKHNDVDHLKSLLKRSSDEPTLVVTEGVFSMDGDLSPLADIAKLTKENDAWLMVDDAHGCGVLGTNGKGCCDVYSITPDILIVTFGKGFGLSGAAVLCNQECGDYLSQFARHHVYSTAMPPAQAHALSHALLMIQQQEWRRDKLKELNQQFESELMNFLGAEKTPTPIKPIIIGEATDAMILADSLKERGLWTTAIRPPTVPVGSARIRVTLSANHSSADISALTQAINELG.

Residue Arg-23 coordinates substrate. Pyridoxal 5'-phosphate is bound at residue 110 to 111 (GF). A substrate-binding site is contributed by His-135. Residues Ser-181, His-209, and Thr-235 each coordinate pyridoxal 5'-phosphate. Position 238 is an N6-(pyridoxal phosphate)lysine (Lys-238). Thr-351 is a binding site for substrate.

Belongs to the class-II pyridoxal-phosphate-dependent aminotransferase family. BioF subfamily. In terms of assembly, homodimer. It depends on pyridoxal 5'-phosphate as a cofactor.

It catalyses the reaction 6-carboxyhexanoyl-[ACP] + L-alanine + H(+) = (8S)-8-amino-7-oxononanoate + holo-[ACP] + CO2. It functions in the pathway cofactor biosynthesis; biotin biosynthesis. Its function is as follows. Catalyzes the decarboxylative condensation of pimeloyl-[acyl-carrier protein] and L-alanine to produce 8-amino-7-oxononanoate (AON), [acyl-carrier protein], and carbon dioxide. In Aliivibrio fischeri (strain ATCC 700601 / ES114) (Vibrio fischeri), this protein is 8-amino-7-oxononanoate synthase.